The following is a 349-amino-acid chain: Inhibitor of nuclear factor kappa-B kinase-interacting protein (349 aa).

Positions 1 to 11 (MSEVKSRKKSG) are enriched in basic residues. The tract at residues 1 to 39 (MSEVKSRKKSGTKGAPAEPGKRNEGGKSPEARGGGGRGW) is disordered. The segment covering 19–30 (PGKRNEGGKSPE) has biased composition (basic and acidic residues). The helical transmembrane segment at 45-61 (GVSLLSLGTCLGLAWFV) threads the bilayer. N-linked (GlcNAc...) asparagine glycosylation is present at Asn145. Coiled-coil stretches lie at residues 183–216 (GLVT…IGDL) and 304–347 (IGRL…HISD). An N-linked (GlcNAc...) asparagine glycan is attached at Asn327.

Post-translationally, N-glycosylated.

The protein localises to the endoplasmic reticulum membrane. In terms of biological role, target of p53/TP53 with pro-apoptotic function. The chain is Inhibitor of nuclear factor kappa-B kinase-interacting protein (IKBIP) from Bos taurus (Bovine).